Here is a 491-residue protein sequence, read N- to C-terminus: FAD-dependent monooxygenase idtM (491 aa).

Residues glutamate 34, glycine 48, arginine 107, aspartate 307, and alanine 320 each contribute to the FAD site. Residues 448-468 form a helical membrane-spanning segment; that stretch reads ILSLVYVVAGLAMMYMSIYLV.

This sequence belongs to the paxM FAD-dependent monooxygenase family. Requires FAD as cofactor.

It is found in the membrane. Its pathway is secondary metabolite biosynthesis. In terms of biological role, FAD-dependent monooxygenase; part of the gene cluster that mediates the biosynthesis of paspalitrems, indole-diterpene (IDT) mycotoxins that are potent tremorgens in mammals. The geranylgeranyl diphosphate (GGPP) synthase idtG is proposed to catalyze the first step in IDT biosynthesis via catalysis of a series of iterative condensations of isopentenyl diphosphate (IPP) with dimethylallyl diphosphate (DMAPP), geranyl diphosphate (GPP), and farnesyl diphosphate (FPP), to form GGPP. Condensation of indole-3-glycerol phosphate with GGPP by the prenyltransferase idtC then forms 3-geranylgeranylindole (3-GGI). Epoxidation of the two terminal alkenes of the geranylgeranyl moiety by the FAD-dependent monooxygenase idtM, and cyclization by the terpene cyclase idtB then leads to the production of paspaline. The cytochrome P450 monooxygenase idtP then catalyzes oxidative elimination of the pendant methyl group at C-12 of paspaline and generates the C-10 ketone to yield 13-desoxypaxilline. The cytochrome P450 monooxygenase idtQ may catalyze the C-13 oxidation of 13-desoxypaxilline to afford paxilline. Considering that both paspalicine and paxilline were detected in C.paspali, idtQ also catalyzes the formation of paspalinine from 13-desoxypaxilline via paspalicine as an intermediate. Finally, the alpha-prenyltransferase idtF prenylates paspalinine at the C-20 or the C-21 positions to yield paspalitrems A and C, respectively. The hydroxylation of paspalitrem A at C-32 by a still unknown oxidase affords paspalitrem B. The chain is FAD-dependent monooxygenase idtM from Claviceps paspali (Rye ergot fungus).